Consider the following 520-residue polypeptide: Sensory neuron membrane protein 2 (520 aa).

Residues Met1–Lys7 lie on the Cytoplasmic side of the membrane. The helical transmembrane segment at Ile8 to Phe28 threads the bilayer. Topologically, residues Gln29–Glu468 are extracellular. 7 N-linked (GlcNAc...) asparagine glycosylation sites follow: Asn44, Asn67, Asn104, Asn228, Asn271, Asn313, and Asn342. Intrachain disulfides connect Cys267–Cys337, Cys298–Cys361, and Cys339–Cys350. The helical transmembrane segment at Val469–Val489 threads the bilayer. Over Ala490–Asn520 the chain is Cytoplasmic.

The protein belongs to the CD36 family. Localizes to cells surrounding the sensory neurons in the antenna. Associate in a ratio of 2:1 with the neurons expressing the other subtype SNMP1.

The protein resides in the cell membrane. Its function is as follows. Plays an olfactory role that is not restricted to pheromone sensitivity. May play a role in the elimination of lipophilic components from the sensillum lymph. This is Sensory neuron membrane protein 2 from Heliothis virescens (Tobacco budworm moth).